Reading from the N-terminus, the 122-residue chain is Ribosome-binding factor A (122 aa).

It belongs to the RbfA family. In terms of assembly, monomer. Binds 30S ribosomal subunits, but not 50S ribosomal subunits or 70S ribosomes.

The protein localises to the cytoplasm. Its function is as follows. One of several proteins that assist in the late maturation steps of the functional core of the 30S ribosomal subunit. Associates with free 30S ribosomal subunits (but not with 30S subunits that are part of 70S ribosomes or polysomes). Required for efficient processing of 16S rRNA. May interact with the 5'-terminal helix region of 16S rRNA. The sequence is that of Ribosome-binding factor A from Polaromonas sp. (strain JS666 / ATCC BAA-500).